Consider the following 513-residue polypeptide: HMG box-containing protein 1 (513 aa).

Residues 151 to 181 (RPPPVSSAKSGPAFPHDHWKEETPVRHERAN) form a disordered region. Positions 165–181 (PHDHWKEETPVRHERAN) are enriched in basic and acidic residues. The AXH domain occupies 202–343 (WCNSWPSTVW…PPGHPDAINF (142 aa)). The HMG box DNA-binding region spans 433-501 (CKRPMNAFML…EQKRLNPDCW (69 aa)).

As to quaternary structure, binds TCF4. Binds RB1. Binds the second PAH repeat of SIN3A. In terms of processing, ubiquitinated by the CTLH E3 ubiquitin-protein ligase complex, leading to subsequent proteasomal degradation. In terms of tissue distribution, highly expressed in liver, adipose tissue, lung, brain, spleen, kidney, skeletal muscle and heart.

It is found in the nucleus. Transcriptional repressor that binds to the promoter region of target genes. Plays a role in the regulation of the cell cycle and of the Wnt pathway. Binds preferentially to the sequence 5'-TTCATTCATTCA-3'. Binding to the histone H1.0 promoter is enhanced by interaction with RB1. Disrupts the interaction between DNA and TCF4. The chain is HMG box-containing protein 1 (Hbp1) from Rattus norvegicus (Rat).